We begin with the raw amino-acid sequence, 658 residues long: Translation factor GUF1, mitochondrial (658 aa).

The N-terminal 40 residues, 1–40 (MRGCLQTVRWLTSAWQRPPSYPPLSRAAPCRFFNVSIPRN), are a transit peptide targeting the mitochondrion. Positions 60 to 240 (DRFRNFCIVA…TVVEQIPAPV (181 aa)) constitute a tr-type G domain. Residues 69-76 (AHVDHGKS), 133-137 (DTPGH), and 187-190 (NKVD) each bind GTP.

It belongs to the TRAFAC class translation factor GTPase superfamily. Classic translation factor GTPase family. LepA subfamily.

It is found in the mitochondrion inner membrane. It catalyses the reaction GTP + H2O = GDP + phosphate + H(+). In terms of biological role, promotes mitochondrial protein synthesis. May act as a fidelity factor of the translation reaction, by catalyzing a one-codon backward translocation of tRNAs on improperly translocated ribosomes. Binds to mitochondrial ribosomes in a GTP-dependent manner. In Paracoccidioides brasiliensis (strain Pb03), this protein is Translation factor GUF1, mitochondrial.